The primary structure comprises 421 residues: Heterogeneous nuclear ribonucleoprotein 27C (421 aa).

2 RRM domains span residues G7 to Q88 and Y96 to P173. Disordered regions lie at residues A171 to Y191 and G240 to D373. S177 carries the phosphoserine modification. The segment covering G240–Y250 has biased composition (polar residues). The span at P264–Q273 shows a compositional bias: pro residues. Polar residues predominate over residues S275 to Q284. Residues N293 to G302 are compositionally biased toward low complexity. Phosphoserine is present on residues S366, S368, and S370. The residue at position 372 (Y372) is a Phosphotyrosine. S379 is modified (phosphoserine). The segment at E392 to V421 is disordered. Polar residues predominate over residues G406–V421.

As to quaternary structure, interacts with sqd; the interaction is RNA-dependent and may be specific for sqd isoform A/sqdA. Interacts with otu; the interaction is RNA-independent.

The protein localises to the nucleus. It is found in the cytoplasm. Its function is as follows. This protein is a component of ribonucleosomes. Could be needed to organize a concentration gradient of a dorsalizing morphogen (Dm) originating in the germinal vesicle. Interacts with grk mRNA (via 3' UTR) and involved in its localization to the dorsal anterior region of the oocyte during dorsal-ventral axis determination; may function as a ribonuclear protein complex together with sqd and otu. Required for polytene chromosome dispersal in nurse cells during oogenesis. May be involved in the regulation of splicing. This Drosophila melanogaster (Fruit fly) protein is Heterogeneous nuclear ribonucleoprotein 27C.